Reading from the N-terminus, the 216-residue chain is Ribosomal RNA small subunit methyltransferase G (216 aa).

Residues Gly-73, Leu-78, 124–125 (AE), and Arg-139 each bind S-adenosyl-L-methionine.

Belongs to the methyltransferase superfamily. RNA methyltransferase RsmG family.

The protein resides in the cytoplasm. Functionally, specifically methylates the N7 position of guanine in position 518 of 16S rRNA. The protein is Ribosomal RNA small subunit methyltransferase G of Arthrobacter sp. (strain FB24).